Consider the following 271-residue polypeptide: Formamidopyrimidine-DNA glycosylase (271 aa).

Proline 2 acts as the Schiff-base intermediate with DNA in catalysis. Residue glutamate 3 is the Proton donor of the active site. Lysine 57 acts as the Proton donor; for beta-elimination activity in catalysis. DNA is bound by residues histidine 90, arginine 109, and lysine 151. The FPG-type zinc-finger motif lies at 236–270 (HVYGRGGKTCTQCGHMLSEIKLGQRATVFCSLCQQ). The active-site Proton donor; for delta-elimination activity is the arginine 260.

Belongs to the FPG family. In terms of assembly, monomer. Requires Zn(2+) as cofactor.

It catalyses the reaction Hydrolysis of DNA containing ring-opened 7-methylguanine residues, releasing 2,6-diamino-4-hydroxy-5-(N-methyl)formamidopyrimidine.. The catalysed reaction is 2'-deoxyribonucleotide-(2'-deoxyribose 5'-phosphate)-2'-deoxyribonucleotide-DNA = a 3'-end 2'-deoxyribonucleotide-(2,3-dehydro-2,3-deoxyribose 5'-phosphate)-DNA + a 5'-end 5'-phospho-2'-deoxyribonucleoside-DNA + H(+). Functionally, involved in base excision repair of DNA damaged by oxidation or by mutagenic agents. Acts as a DNA glycosylase that recognizes and removes damaged bases. Has a preference for oxidized purines, such as 7,8-dihydro-8-oxoguanine (8-oxoG). Has AP (apurinic/apyrimidinic) lyase activity and introduces nicks in the DNA strand. Cleaves the DNA backbone by beta-delta elimination to generate a single-strand break at the site of the removed base with both 3'- and 5'-phosphates. The chain is Formamidopyrimidine-DNA glycosylase from Shewanella pealeana (strain ATCC 700345 / ANG-SQ1).